We begin with the raw amino-acid sequence, 349 residues long: N-acetyltaurine hydrolase (349 aa).

A divalent metal cation is bound by residues His26, His28, Glu169, His201, His230, and Asp298.

It belongs to the metallo-dependent hydrolases superfamily. Phosphotriesterase family. A divalent metal cation serves as cofactor.

It is found in the cytoplasm. Its subcellular location is the cytosol. It catalyses the reaction N-acetyltaurine + H2O = taurine + acetate. It carries out the reaction N-propanoyltaurine + H2O = propanoate + taurine. The catalysed reaction is N-acetyl-L-methionine + H2O = L-methionine + acetate. The enzyme catalyses N-acetyl-L-isoleucine + H2O = L-isoleucine + acetate. It catalyses the reaction N-acetyl-L-leucine + H2O = L-leucine + acetate. It carries out the reaction N-acetyl-L-valine + H2O = L-valine + acetate. In terms of biological role, N-acetyltaurine hydrolase that regulates feeding by catalyzing the hydrolysis of N-acetyltaurine into taurine and acetate. N-acetyltaurine has anorexigenic and anti-obesity effects that are dependent on GFRAL receptor and GDF15. PTER also acts on other N-acetyl amino acids (Met, Ile, Leu, Val) and N-propionyltaurine, but at lower rates. The chain is N-acetyltaurine hydrolase from Pongo abelii (Sumatran orangutan).